The following is a 98-amino-acid chain: DNA/RNA-binding protein Alba (98 aa).

An N6-acetyllysine modification is found at K16.

Belongs to the histone-like Alba family. In terms of processing, acetylated. Acetylation at Lys-16 decreases DNA-binding affinity.

It is found in the cytoplasm. The protein localises to the chromosome. In terms of biological role, binds double-stranded DNA tightly but without sequence specificity. Involved in DNA compaction. The chain is DNA/RNA-binding protein Alba from Metallosphaera sedula (strain ATCC 51363 / DSM 5348 / JCM 9185 / NBRC 15509 / TH2).